Here is a 542-residue protein sequence, read N- to C-terminus: MGEEQSTVSGGGGPQESQTLASGTAGHPEPPRPQGDSARAPPLRAASAEPSGGGCGSDWGCADTSAPEPARSLGPPGWSKSRAPAQPAGLALTGPLNPQTLPLQLELEEEEEEAGDRKEGGDEQQEAPPGEELEPRTRVGAADGLVLDVLGQRRPSLAKRQVFCSVYCVESDLPEAPASEQLSPPASPPGAPPVLNPPSTRSSFPSPRLSLPTDSLSPDGGSIELEFYLAPEPFSMPSLLGAPPYSGLGGVGDPYVPLMVLMCRVCLEDKPIKPLPCCKKAVCEECLKVYLSAQVQLGQVEIKCPITECFEFLEETTVVYNLTHEDSIKYKYFLELGRIDSSTKPCPQCKHFTTFKKKGHIPTPSRSESKYKIQCPTCQFVWCFKCHSPWHEGVNCKEYKKGDKLLRHWASEIEHGQRNAQKCPKCKIHIQRTEGCDHMTCSQCNTNFCYRCGERYRQLRFFGDHTSNLSIFGCKYRYLPERPHLRRLVRGSVCAGKLFIAPLIMVLGLALGAIAVVIGLFVFPIYCLCKKQRKRSRTGMHW.

2 disordered regions span residues 1 to 140 (MGEE…TRVG) and 176 to 216 (APAS…TDSL). The span at 37-50 (SARAPPLRAASAEP) shows a compositional bias: low complexity. Over residues 122 to 132 (DEQQEAPPGEE) the composition is skewed to acidic residues. Positions 185–196 (PASPPGAPPVLN) are enriched in pro residues. Positions 197 to 213 (PPSTRSSFPSPRLSLPT) are enriched in low complexity. The TRIAD supradomain stretch occupies residues 259–478 (MVLMCRVCLE…LSIFGCKYRY (220 aa)). Zn(2+) contacts are provided by Cys263, Cys266, Cys283, Cys286, Cys383, Cys386, His391, Cys396, Cys423, and Cys426. Residues 263–309 (CRVCLEDKPIKPLPCCKKAVCEECLKVYLSAQVQLGQVEIKCPITEC) form an RING-type 1 zinc finger. The IBR-type zinc finger occupies 328–396 (IKYKYFLELG…HSPWHEGVNC (69 aa)). An RING-type 2; atypical zinc finger spans residues 423–452 (CPKCKIHIQRTEGCDHMTCSQCNTNFCYRC). Residue Cys436 is part of the active site. Zn(2+) contacts are provided by Cys441, Cys444, Cys449, Cys452, His465, and Cys474. The chain crosses the membrane as a helical span at residues 503 to 523 (LIMVLGLALGAIAVVIGLFVF).

It belongs to the RBR family. RNF217 subfamily. In terms of assembly, interacts with HAX1. As to expression, mainly expressed in testis and skeletal muscle.

The protein localises to the membrane. It is found in the cytoplasm. It catalyses the reaction [E2 ubiquitin-conjugating enzyme]-S-ubiquitinyl-L-cysteine + [acceptor protein]-L-lysine = [E2 ubiquitin-conjugating enzyme]-L-cysteine + [acceptor protein]-N(6)-ubiquitinyl-L-lysine.. Its pathway is protein modification; protein ubiquitination. Its function is as follows. E3 ubiquitin-protein ligase which accepts ubiquitin from E2 ubiquitin-conjugating enzymes in the form of a thioester and then directly transfers the ubiquitin to targeted substrates. Mediates the degradation of the iron exporter ferroportin/SLC40A1 and thus regulates iron homeostasis. This chain is E3 ubiquitin-protein ligase RNF217 (RNF217), found in Homo sapiens (Human).